A 535-amino-acid chain; its full sequence is PAC-1 interacting and coiled-coil domain-containing protein 1 (535 aa).

The interval 1 to 67 (MIITTPRRAN…KQTPPRSPVI (67 aa)) is disordered. The span at 36 to 57 (SSTTPSSIGSSSSSSSSYASST) shows a compositional bias: low complexity. Coiled-coil stretches lie at residues 109–172 (KLQY…RDLS) and 198–242 (SLMK…RQSL). 2 disordered regions span residues 254 to 277 (NESE…NDEE) and 503 to 535 (TCRP…HTHN). Over residues 503-525 (TCRPTTTLISSTQPAQRSVSVEK) the composition is skewed to polar residues. Over residues 526–535 (NNNNNVHTHN) the composition is skewed to low complexity.

Belongs to the CCDC85 family. In terms of assembly, interacts with pac-1 and jac-1.

It is found in the cell junction. Its subcellular location is the adherens junction. Linker protein which helps to recruit the Rho GTPase-activating protein, pac-1, to adherens junctions. This is PAC-1 interacting and coiled-coil domain-containing protein 1 from Caenorhabditis elegans.